Consider the following 135-residue polypeptide: C-type lectin BPL (135 aa).

Cystine bridges form between Cys3–Cys14, Cys31–Cys131, Cys38–Cys133, and Cys106–Cys123. A C-type lectin domain is found at 10–132 (MNGLCYKIFN…CESKNAFLCQ (123 aa)). Residues Gln96, Asp98, Glu104, and Asp120 each coordinate Ca(2+). The Galactose-binding motif lies at 96-98 (QPD).

It belongs to the true venom lectin family. In terms of assembly, homodimer; disulfide-linked. In terms of tissue distribution, expressed by the venom gland.

The protein localises to the secreted. Its function is as follows. Galactose-binding protein which recognizes specific carbohydrate structures and agglutinates a variety of animal cells by binding to cell-surface glycoproteins and glycolipids. Calcium-dependent lectin. Shows high hemagglutinating activity in the presence of human erythrocytes, which are agglutinated with a minimum hemagglutination concentration (MHC) of 2.5-0.35 ug/ml. Causes indirect nephrotoxicity. Causes reductions in perfusion pressures, renal vascular resistance, urinary flow, glomerular filtration rate, sodium, potassium and chloride tubular transport. Its effects may be caused by the release of inflammatory mediators. In Bothrops pirajai (Piraja's lancehead), this protein is C-type lectin BPL.